A 422-amino-acid polypeptide reads, in one-letter code: uncharacterized protein (422 aa).

One can recognise an RRM domain in the interval 5–83; the sequence is CVVYVGNIPY…RRLRVDFPTA (79 aa). A disordered region spans residues 337-358; that stretch reads RSSSIPSSGSIRSPSLTTTSAQ.

Its subcellular location is the nucleus. This is an uncharacterized protein from Schizosaccharomyces pombe (strain 972 / ATCC 24843) (Fission yeast).